Here is a 513-residue protein sequence, read N- to C-terminus: GTPase Obg (513 aa).

One can recognise an Obg domain in the interval 3 to 160 (THFVDRVVVH…LDLHLEVKTL (158 aa)). In terms of domain architecture, OBG-type G spans 161-337 (ADVALVGFPS…LSFAMAELVS (177 aa)). GTP contacts are provided by residues 167–174 (GFPSAGKS), 192–196 (FTTLV), 213–216 (DVPG), 289–292 (NKAD), and 318–320 (SAV). Residues serine 174 and threonine 194 each coordinate Mg(2+). The OCT domain occupies 355–444 (PRAVDDQGFK…ANAVVFDWEP (90 aa)). The disordered stretch occupies residues 457–513 (GSDLRLEDHSRPTRDEKRLQERERRAAKVTARDELEAERRAGHWTAADEADEELSQR). The segment covering 458-497 (SDLRLEDHSRPTRDEKRLQERERRAAKVTARDELEAERRA) has biased composition (basic and acidic residues). Acidic residues predominate over residues 504 to 513 (DEADEELSQR).

This sequence belongs to the TRAFAC class OBG-HflX-like GTPase superfamily. OBG GTPase family. In terms of assembly, monomer. Mg(2+) serves as cofactor.

Its subcellular location is the cytoplasm. An essential GTPase which binds GTP, GDP and possibly (p)ppGpp with moderate affinity, with high nucleotide exchange rates and a fairly low GTP hydrolysis rate. Plays a role in control of the cell cycle, stress response, ribosome biogenesis and in those bacteria that undergo differentiation, in morphogenesis control. The sequence is that of GTPase Obg from Kineococcus radiotolerans (strain ATCC BAA-149 / DSM 14245 / SRS30216).